Consider the following 513-residue polypeptide: MKRALISVSDKTNLVDFAKGLVQNGYEIISTGGTKKTLDEAGVKTISVEEVTNFPEILDGRVKTLNPYIHGGLLAKRDDLEHMATLEKLNIKPIDLVCVNLYPFKQTIEKPDVTTEEAIENIDIGGPSLLRAASKNYQDVTVVTDKNDYDLVLKEIAEKGNTTLETRAKLAAKVFRATAAYDAVIANYLTKQVGLEDPEKLTLTYDLKEKMRYGENSHQKAWLYEDAIPKSFSILQAHQLHGKKLSYNNIKDADEALRCIREFQDEPTVVAMKHMNPCGIGRGDTLEEAWDRAYEADSVSIFGGVIALNRKVDLATAKKMHKIFLEIIIAPGFDDDALEVLEKKKNIRLLKLDFSKENEPTRPEIVSVMGGILQQEQDTLVENTDDWKVVTNAQPTEAQLKTMMFALKAVKHTKSNAIVVANDERTLGVGAGQPNRIDSAKIAIKHAGDAIDDRAVLSSDAFFPFNDCVEYAAKHGIKAIVQPGGSIRDKDSIEIADKYGVAMVFTGYRHFRH.

The region spanning 1-144 is the MGS-like domain; the sequence is MKRALISVSD…KNYQDVTVVT (144 aa).

The protein belongs to the PurH family.

It catalyses the reaction (6R)-10-formyltetrahydrofolate + 5-amino-1-(5-phospho-beta-D-ribosyl)imidazole-4-carboxamide = 5-formamido-1-(5-phospho-D-ribosyl)imidazole-4-carboxamide + (6S)-5,6,7,8-tetrahydrofolate. The enzyme catalyses IMP + H2O = 5-formamido-1-(5-phospho-D-ribosyl)imidazole-4-carboxamide. It functions in the pathway purine metabolism; IMP biosynthesis via de novo pathway; 5-formamido-1-(5-phospho-D-ribosyl)imidazole-4-carboxamide from 5-amino-1-(5-phospho-D-ribosyl)imidazole-4-carboxamide (10-formyl THF route): step 1/1. It participates in purine metabolism; IMP biosynthesis via de novo pathway; IMP from 5-formamido-1-(5-phospho-D-ribosyl)imidazole-4-carboxamide: step 1/1. This is Bifunctional purine biosynthesis protein PurH from Lactobacillus acidophilus (strain ATCC 700396 / NCK56 / N2 / NCFM).